Reading from the N-terminus, the 826-residue chain is BLOC-2 complex member HPS5 homolog (826 aa).

WD repeat units lie at residues 22-61 (KHHNRIKYTCFDISDSYIIFGASSGSLYLFNRNGKFLLLI), 63-102 (NKHGAITSLSISANSKYVAFATQRSLICVYAVNLSAQATP), and 110-149 (DQSVQVTCIHWTQDEKQFYYGDSRGQVSLVLLSSFIGHSL). The span at 422–446 (ALDTHSSGGSSATTERSLSGGSSSR) shows a compositional bias: polar residues. The segment at 422–447 (ALDTHSSGGSSATTERSLSGGSSSRA) is disordered.

The protein belongs to the HPS5 family. In terms of tissue distribution, expressed in eye pigment granules.

Functionally, has a role in the biogenesis of eye pigment granules. Eye pigment granules are specialized forms of late endosomes or lysosomes. Biogenesis of pigment granules in the eye requires molecular components required for protein delivery to lysosomes. This chain is BLOC-2 complex member HPS5 homolog, found in Drosophila melanogaster (Fruit fly).